Here is a 235-residue protein sequence, read N- to C-terminus: Thiamine-phosphate synthase (235 aa).

4-amino-2-methyl-5-(diphosphooxymethyl)pyrimidine is bound by residues 50 to 54 and Asn-91; that span reads QLRDK. Mg(2+) is bound by residues Asp-92 and Asp-111. Residue Ser-130 coordinates 4-amino-2-methyl-5-(diphosphooxymethyl)pyrimidine. 160–162 is a 2-[(2R,5Z)-2-carboxy-4-methylthiazol-5(2H)-ylidene]ethyl phosphate binding site; that stretch reads TPT. A 4-amino-2-methyl-5-(diphosphooxymethyl)pyrimidine-binding site is contributed by Lys-163. Residue Gly-191 participates in 2-[(2R,5Z)-2-carboxy-4-methylthiazol-5(2H)-ylidene]ethyl phosphate binding.

Belongs to the thiamine-phosphate synthase family. Mg(2+) serves as cofactor.

It catalyses the reaction 2-[(2R,5Z)-2-carboxy-4-methylthiazol-5(2H)-ylidene]ethyl phosphate + 4-amino-2-methyl-5-(diphosphooxymethyl)pyrimidine + 2 H(+) = thiamine phosphate + CO2 + diphosphate. It carries out the reaction 2-(2-carboxy-4-methylthiazol-5-yl)ethyl phosphate + 4-amino-2-methyl-5-(diphosphooxymethyl)pyrimidine + 2 H(+) = thiamine phosphate + CO2 + diphosphate. The enzyme catalyses 4-methyl-5-(2-phosphooxyethyl)-thiazole + 4-amino-2-methyl-5-(diphosphooxymethyl)pyrimidine + H(+) = thiamine phosphate + diphosphate. The protein operates within cofactor biosynthesis; thiamine diphosphate biosynthesis; thiamine phosphate from 4-amino-2-methyl-5-diphosphomethylpyrimidine and 4-methyl-5-(2-phosphoethyl)-thiazole: step 1/1. Its function is as follows. Condenses 4-methyl-5-(beta-hydroxyethyl)thiazole monophosphate (THZ-P) and 2-methyl-4-amino-5-hydroxymethyl pyrimidine pyrophosphate (HMP-PP) to form thiamine monophosphate (TMP). This chain is Thiamine-phosphate synthase, found in Mycobacterium leprae (strain TN).